The following is a 93-amino-acid chain: Putative septation protein SpoVG (93 aa).

Belongs to the SpoVG family.

In terms of biological role, could be involved in septation. This Lachnoclostridium phytofermentans (strain ATCC 700394 / DSM 18823 / ISDg) (Clostridium phytofermentans) protein is Putative septation protein SpoVG.